A 520-amino-acid chain; its full sequence is Ribonuclease Y (520 aa).

A helical transmembrane segment spans residues 4–24 (TVWILISILLATVGAVVGFFV). The interval 86–116 (KQENRLMQKEENLDRKDETLDKREQQLEKKE) is disordered. Residues 210 to 273 (TVSVVNLPND…ETARIALDKL (64 aa)) enclose the KH domain. Residues 336 to 429 (VLKHSMEVAY…VAAADALSAA (94 aa)) enclose the HD domain.

Belongs to the RNase Y family.

Its subcellular location is the cell membrane. Its function is as follows. Endoribonuclease that initiates mRNA decay. This is Ribonuclease Y from Bacillus cereus (strain ATCC 10987 / NRS 248).